The primary structure comprises 93 residues: Large ribosomal subunit protein bL36m (93 aa).

The transit peptide at 1-35 (MFLQTLRLTMPRMFLHMKPSPITITRACTVPSLLS) directs the protein to the mitochondrion.

It belongs to the bacterial ribosomal protein bL36 family. Component of the mitochondrial large ribosomal subunit (mt-LSU). Mature yeast 74S mitochondrial ribosomes consist of a small (37S) and a large (54S) subunit. The 37S small subunit contains a 15S ribosomal RNA (15S mt-rRNA) and 34 different proteins. The 54S large subunit contains a 21S rRNA (21S mt-rRNA) and 46 different proteins. bL36m has a zinc binding site.

It is found in the mitochondrion. Component of the mitochondrial ribosome (mitoribosome), a dedicated translation machinery responsible for the synthesis of mitochondrial genome-encoded proteins, including at least some of the essential transmembrane subunits of the mitochondrial respiratory chain. The mitoribosomes are attached to the mitochondrial inner membrane and translation products are cotranslationally integrated into the membrane. bL36m may be involved in a process influencing telomere capping. The chain is Large ribosomal subunit protein bL36m (RTC6) from Saccharomyces cerevisiae (strain ATCC 204508 / S288c) (Baker's yeast).